The chain runs to 491 residues: Sucrose transport protein SUC9 (491 aa).

Residues 1-12 show a composition bias toward basic and acidic residues; that stretch reads MSDIQAKEDAAP. Residues 1–26 form a disordered region; the sequence is MSDIQAKEDAAPVDRQSSSSVVVPDE. The Cytoplasmic segment spans residues 1 to 33; it reads MSDIQAKEDAAPVDRQSSSSVVVPDEPSPLRKM. Ser17 carries the post-translational modification Phosphoserine. Residues 34-54 form a helical membrane-spanning segment; that stretch reads ISVASIAAGIQFGWALQLSLL. Topologically, residues 55-68 are extracellular; that stretch reads TPYVQLLGVPHKWS. Residues 69–89 traverse the membrane as a helical segment; that stretch reads SFIWLCGPISGLLVQPTVGYF. Over 90-101 the chain is Cytoplasmic; it reads SDRCKSRFGRRR. The helical transmembrane segment at 102 to 122 threads the bilayer; the sequence is PFIATGALLVALAVILIGFAA. The Extracellular portion of the chain corresponds to 123–139; it reads DFGHTMGDKLDEAVKIR. Residues 140–160 form a helical membrane-spanning segment; the sequence is AVGFFVVGFWILDVANNTLQG. Residues 161–181 lie on the Cytoplasmic side of the membrane; sequence PCRAFLGDLAAGDAKKTRTAN. A helical transmembrane segment spans residues 182-202; it reads AIFSFFMAVGNVLGYAAGSYT. Residues 203–224 lie on the Extracellular side of the membrane; it reads NLHKIFPFTVTKACDIYCANLK. A helical transmembrane segment spans residues 225–245; the sequence is SCFIISITLLIVLTIIALWYV. Over 246–277 the chain is Cytoplasmic; the sequence is EDKQWSPNADSDNEKTPFFGEIFGAFKVMKRP. A helical membrane pass occupies residues 278–298; it reads MWMLLAVTALNWIAWFPFLLY. The Extracellular segment spans residues 299-329; that stretch reads DTDWMGREVYGGDSAGDDKMKKLYNHGIQVG. Residues 330 to 350 traverse the membrane as a helical segment; that stretch reads SLGLMLNSIVLGVMSLVIGVI. Residues 351–358 lie on the Cytoplasmic side of the membrane; sequence SKKIGAKR. The helical transmembrane segment at 359-379 threads the bilayer; the sequence is LWGAVNIILAVCLAMTVLVTK. Residues 380-406 are Extracellular-facing; that stretch reads KAEEHRKIAGRMALPTNAIRDGALSLF. The chain crosses the membrane as a helical span at residues 407–427; sequence AILGIPLAITFSIPFALASII. At 428–443 the chain is on the cytoplasmic side; that stretch reads SSSSGAGQGLSLGVLN. A helical membrane pass occupies residues 444–464; the sequence is MAIVIPQMIVSFGVGPIDALF. The Extracellular portion of the chain corresponds to 465 to 468; it reads GGGN. The helical transmembrane segment at 469-489 threads the bilayer; the sequence is LPGFVVGAIAALISSVVALTV. At 490-491 the chain is on the cytoplasmic side; sequence LP.

The protein belongs to the glycoside-pentoside-hexuronide (GPH) cation symporter transporter (TC 2.A.2.4) family. In terms of tissue distribution, widely expressed.

The protein localises to the cell membrane. It carries out the reaction sucrose(out) + H(+)(out) = sucrose(in) + H(+)(in). Its pathway is glycan biosynthesis; sucrose metabolism. Inhibited by protonophores (e.g. carbonyl cyanide m-chlorophenyl-hydrazone (CCCP)) and SH group inhibitors (e.g. p-chloromercuribenzene sulphonic acid (PCMBS)). Functionally, high-affinity sucrose transporter. Responsible for the transport of sucrose into the cell, with the concomitant uptake of protons (symport system). Can also transport a wide range of glucosides, such as helicin, salicin, arbutin, maltose, fraxin, esculin, uranose, alpha-methylglucoside, alpha-phenylglucoside and beta-phenylglucoside. Plays a role in flowering time transition delay. In Arabidopsis thaliana (Mouse-ear cress), this protein is Sucrose transport protein SUC9.